Here is a 184-residue protein sequence, read N- to C-terminus: Probable maltose O-acetyltransferase (184 aa).

Asn84 is a binding site for acetyl-CoA. The active-site Proton donor/acceptor is His114. Acetyl-CoA contacts are provided by residues Gly141, Ser159, 164–165 (TK), Arg179, and Lys182.

This sequence belongs to the transferase hexapeptide repeat family. Homodimer.

It catalyses the reaction D-maltose + acetyl-CoA = 1-O-acetylmaltose + CoA. Catalyzes the CoA-dependent transfer of an acetyl group to maltose and other sugars. Acetylates glucose exclusively at the C6 position and maltose at the C6 position of the non-reducing end glucosyl moiety. Is able to acetylate maltooligosaccharides. The sequence is that of Probable maltose O-acetyltransferase (maa) from Bacillus subtilis (strain 168).